Here is a 452-residue protein sequence, read N- to C-terminus: Probable cysteine protease RD21C (452 aa).

The N-terminal stretch at 1-29 is a signal peptide; sequence MATSIKSITLALLIFSVLLISLSLGSVTA. A propeptide spans 30–128 (activation peptide); sequence TETTRNEAEA…EKYLYKVGDS (99 aa). N-linked (GlcNAc...) asparagine glycosylation is present at asparagine 82. 5 disulfides stabilise this stretch: cysteine 150–cysteine 192, cysteine 184–cysteine 226, cysteine 284–cysteine 335, cysteine 363–cysteine 375, and cysteine 369–cysteine 390. Cysteine 153 is a catalytic residue. Residues histidine 290 and asparagine 310 contribute to the active site. Residues 346-452 constitute a propeptide, removed in mature form; the sequence is KSSGSNPPKP…KSTNMLVGSA (107 aa).

Belongs to the peptidase C1 family. As to quaternary structure, interacts with WSCP.

Probable thiol protease. In Arabidopsis thaliana (Mouse-ear cress), this protein is Probable cysteine protease RD21C.